The sequence spans 948 residues: Sensor histidine kinase RcsC (948 aa).

At 1-20 (MKYLASFRTTLKVSRYLFRA) the chain is on the cytoplasmic side. Residues 21-41 (LALLIWLLIAFVSVFYIVNAL) traverse the membrane as a helical segment. Topologically, residues 42-313 (HQRESEIRQE…PVDLVLERIR (272 aa)) are periplasmic. Residues 314 to 334 (ILILNAILLNVLVGAGLFTLA) form a helical membrane-spanning segment. At 335-948 (RMYERRIFIP…YAERVRKTRA (614 aa)) the chain is on the cytoplasmic side. The 69-residue stretch at 357–425 (QFNRKIVASA…VLTSNNTNLQ (69 aa)) folds into the PAS domain. A Histidine kinase domain is found at 476 to 692 (TVSHELRTPL…QFTLRIPLYG (217 aa)). The residue at position 479 (H479) is a Phosphohistidine; by autocatalysis. The ABL domain maps to 705–805 (AGTCCWLAVR…ARIYSIELDS (101 aa)). The 115-residue stretch at 826–940 (MILVVDDHPI…ALKQTLAVYA (115 aa)) folds into the Response regulatory domain. D875 carries the post-translational modification 4-aspartylphosphate.

It belongs to the RcsC family. In terms of assembly, interacts with RcsD. Post-translationally, autophosphorylated. Activation probably requires a transfer of a phosphate group from a His in the transmitter domain to an Asp in the receiver domain.

It is found in the cell inner membrane. The catalysed reaction is ATP + protein L-histidine = ADP + protein N-phospho-L-histidine.. In terms of biological role, component of the Rcs signaling system, which controls transcription of numerous genes. RcsC functions as a membrane-associated protein kinase that phosphorylates RcsD in response to environmental signals. The phosphoryl group is then transferred to the response regulator RcsB. This Salmonella typhi protein is Sensor histidine kinase RcsC.